Here is a 440-residue protein sequence, read N- to C-terminus: Lysine histidine transporter-like 6 (440 aa).

A compositionally biased stretch (polar residues) spans 1 to 10; it reads MVSSSPVSPS. The interval 1-25 is disordered; that stretch reads MVSSSPVSPSKETDRKSGEKWTAED. The Cytoplasmic portion of the chain corresponds to 1-31; it reads MVSSSPVSPSKETDRKSGEKWTAEDPSRPAK. Basic and acidic residues predominate over residues 11 to 25; that stretch reads KETDRKSGEKWTAED. The helical transmembrane segment at 32–51 threads the bilayer; the sequence is WWYSTFHTVTAMIGAGVLSL. Residues 52–61 lie on the Extracellular side of the membrane; sequence PYAMAYLGWG. A helical transmembrane segment spans residues 62–82; the sequence is PGTFVLAMTWGLTLNTMWQMV. The Cytoplasmic portion of the chain corresponds to 83–109; it reads QLHECVPGTRFDRYIDLGRYAFGPKLG. The helical transmembrane segment at 110-130 threads the bilayer; the sequence is PWIVLPQQLIVQVGCNIVYMV. The Extracellular portion of the chain corresponds to 131–152; that stretch reads TGGKCLKQFVEITCSTCTPVRQ. The helical transmembrane segment at 153–173 threads the bilayer; the sequence is SYWILGFGGVHFILSQLPNFN. A topological domain (cytoplasmic) is located at residue S174. A helical membrane pass occupies residues 175 to 195; the sequence is VAGVSLAAAVMSLCYSTIAWG. Residues 196-221 are Extracellular-facing; the sequence is GSIAHGRVPDVSYDYKATNPGDFTFR. The chain crosses the membrane as a helical span at residues 222 to 242; sequence VFNALGQISFAFAGHAVALEI. The Cytoplasmic portion of the chain corresponds to 243 to 261; that stretch reads QATMPSTPERPSKVPMWQG. A helical transmembrane segment spans residues 262–282; that stretch reads VIGAYVVNAVCYFPVALICYW. The Extracellular portion of the chain corresponds to 283–300; it reads AFGQDVDDNVLMNLQRPA. Residues 301–321 traverse the membrane as a helical segment; that stretch reads WLIAAANLMVVVHVIGSYQVF. Topologically, residues 322-353 are cytoplasmic; that stretch reads AMPVFDLLERMMVNKFGFKHGVVLRFFTRTIY. 2 consecutive transmembrane segments (helical) span residues 354–374 and 375–395; these read VAFT…LGFF and GGFG…LIIK. Residues 396–399 are Cytoplasmic-facing; sequence KPRR. Residues 400–420 traverse the membrane as a helical segment; it reads FSVTWFVNWISIIVGVFIMLA. The Extracellular portion of the chain corresponds to 421-440; the sequence is STIGGLRNIIADSSTYSFYA.

Belongs to the amino acid/polyamine transporter 2 family. Amino acid/auxin permease (AAAP) (TC 2.A.18.2) subfamily.

It is found in the cell membrane. In terms of biological role, amino acid transporter. The polypeptide is Lysine histidine transporter-like 6 (Arabidopsis thaliana (Mouse-ear cress)).